A 124-amino-acid chain; its full sequence is Small ribosomal subunit protein uS12 (124 aa).

Asp89 carries the post-translational modification 3-methylthioaspartic acid.

It belongs to the universal ribosomal protein uS12 family. As to quaternary structure, part of the 30S ribosomal subunit. Contacts proteins S8 and S17. May interact with IF1 in the 30S initiation complex.

Its function is as follows. With S4 and S5 plays an important role in translational accuracy. Functionally, interacts with and stabilizes bases of the 16S rRNA that are involved in tRNA selection in the A site and with the mRNA backbone. Located at the interface of the 30S and 50S subunits, it traverses the body of the 30S subunit contacting proteins on the other side and probably holding the rRNA structure together. The combined cluster of proteins S8, S12 and S17 appears to hold together the shoulder and platform of the 30S subunit. The chain is Small ribosomal subunit protein uS12 from Buchnera aphidicola subsp. Cinara cedri (strain Cc).